A 23-amino-acid chain; its full sequence is Chaperonin GroEL (23 aa).

Belongs to the chaperonin (HSP60) family. Forms a cylinder of 14 subunits composed of two heptameric rings stacked back-to-back. Interacts with the co-chaperonin GroES. Post-translationally, phosphorylated on threonine.

Its subcellular location is the cytoplasm. The enzyme catalyses ATP + H2O + a folded polypeptide = ADP + phosphate + an unfolded polypeptide.. In terms of biological role, together with its co-chaperonin GroES, plays an essential role in assisting protein folding. The GroEL-GroES system forms a nano-cage that allows encapsulation of the non-native substrate proteins and provides a physical environment optimized to promote and accelerate protein folding. The chain is Chaperonin GroEL from Acidithiobacillus ferrooxidans (Thiobacillus ferrooxidans).